Here is a 445-residue protein sequence, read N- to C-terminus: Histidinol dehydrogenase (445 aa).

Y130, Q192, and N215 together coordinate NAD(+). Residues S238, Q260, and H263 each coordinate substrate. Positions 260 and 263 each coordinate Zn(2+). Active-site proton acceptor residues include E328 and H329. The substrate site is built by H329, D362, E416, and H421. A Zn(2+)-binding site is contributed by D362. H421 provides a ligand contact to Zn(2+).

It belongs to the histidinol dehydrogenase family. Requires Zn(2+) as cofactor.

The enzyme catalyses L-histidinol + 2 NAD(+) + H2O = L-histidine + 2 NADH + 3 H(+). It participates in amino-acid biosynthesis; L-histidine biosynthesis; L-histidine from 5-phospho-alpha-D-ribose 1-diphosphate: step 9/9. Its function is as follows. Catalyzes the sequential NAD-dependent oxidations of L-histidinol to L-histidinaldehyde and then to L-histidine. The protein is Histidinol dehydrogenase of Gloeobacter violaceus (strain ATCC 29082 / PCC 7421).